We begin with the raw amino-acid sequence, 324 residues long: Probable carboxylesterase 9 (324 aa).

The Involved in the stabilization of the negatively charged intermediate by the formation of the oxyanion hole motif lies at 86–88 (HGS). Residues Ser-171, Asp-272, and His-302 contribute to the active site.

This sequence belongs to the 'GDXG' lipolytic enzyme family. Expressed in flowers.

The enzyme catalyses a carboxylic ester + H2O = an alcohol + a carboxylate + H(+). In terms of biological role, carboxylesterase acting on esters with varying acyl chain length. This chain is Probable carboxylesterase 9 (CXE9), found in Arabidopsis thaliana (Mouse-ear cress).